A 181-amino-acid chain; its full sequence is Photosystem I assembly protein Ycf4 (181 aa).

Helical transmembrane passes span 19-39 (YFWAFFLLVGGLGFLLAGISS) and 62-82 (VMMFYGALSLGISIYTLLTII).

It belongs to the Ycf4 family.

The protein resides in the plastid. The protein localises to the chloroplast thylakoid membrane. Functionally, seems to be required for the assembly of the photosystem I complex. The sequence is that of Photosystem I assembly protein Ycf4 from Phaeodactylum tricornutum (strain CCAP 1055/1).